The primary structure comprises 298 residues: MSNAREIRSKVQSVKNTQKITGAMELVAASKMRGAIVKMNNVRPYVESANTIIKNVTAASIDYPNPYLFDRDVKRVGYIVISTDRGLCGGLNINLFKHVLKEIKNNIEDRVGVDVCVIGSKAENFFAKLKDVNIVATAHYNDKDKEGSIRAIGGAVKVMLDKFTAGEIDRLYMSSNQFVSTIKQRPRLQTLLPIQDIFSAEEIKANKEKATKGHWDYIYERDIEEVLNALFIRYIEAQVRGAILENAACEQAARMMAMKNATDNASDIIDQLKLDYNKVRQAMITQELAEICSGAAAV.

It belongs to the ATPase gamma chain family. In terms of assembly, F-type ATPases have 2 components, CF(1) - the catalytic core - and CF(0) - the membrane proton channel. CF(1) has five subunits: alpha(3), beta(3), gamma(1), delta(1), epsilon(1). CF(0) has three main subunits: a, b and c.

The protein localises to the cell inner membrane. In terms of biological role, produces ATP from ADP in the presence of a proton gradient across the membrane. The gamma chain is believed to be important in regulating ATPase activity and the flow of protons through the CF(0) complex. The chain is ATP synthase gamma chain from Francisella tularensis subsp. tularensis (strain FSC 198).